The primary structure comprises 201 residues: Recombination protein RecR (201 aa).

The C4-type zinc-finger motif lies at 60–75 (CQVCGNVDVRDPCTVC). Residues 83–178 (SVLVVVAEVA…KVTRLAHGVP (96 aa)) form the Toprim domain.

This sequence belongs to the RecR family.

Its function is as follows. May play a role in DNA repair. It seems to be involved in an RecBC-independent recombinational process of DNA repair. It may act with RecF and RecO. The protein is Recombination protein RecR of Azorhizobium caulinodans (strain ATCC 43989 / DSM 5975 / JCM 20966 / LMG 6465 / NBRC 14845 / NCIMB 13405 / ORS 571).